We begin with the raw amino-acid sequence, 509 residues long: Bifunctional purine biosynthesis protein PurH (509 aa).

Residues 1 to 144 (MKRALISVSD…KNYAAVTVVV (144 aa)) form the MGS-like domain.

This sequence belongs to the PurH family.

It catalyses the reaction (6R)-10-formyltetrahydrofolate + 5-amino-1-(5-phospho-beta-D-ribosyl)imidazole-4-carboxamide = 5-formamido-1-(5-phospho-D-ribosyl)imidazole-4-carboxamide + (6S)-5,6,7,8-tetrahydrofolate. The catalysed reaction is IMP + H2O = 5-formamido-1-(5-phospho-D-ribosyl)imidazole-4-carboxamide. The protein operates within purine metabolism; IMP biosynthesis via de novo pathway; 5-formamido-1-(5-phospho-D-ribosyl)imidazole-4-carboxamide from 5-amino-1-(5-phospho-D-ribosyl)imidazole-4-carboxamide (10-formyl THF route): step 1/1. Its pathway is purine metabolism; IMP biosynthesis via de novo pathway; IMP from 5-formamido-1-(5-phospho-D-ribosyl)imidazole-4-carboxamide: step 1/1. This Listeria welshimeri serovar 6b (strain ATCC 35897 / DSM 20650 / CCUG 15529 / CIP 8149 / NCTC 11857 / SLCC 5334 / V8) protein is Bifunctional purine biosynthesis protein PurH.